The chain runs to 146 residues: Transcriptional regulator MraZ (146 aa).

SpoVT-AbrB domains are found at residues 7 to 54 and 83 to 126; these read NATN…GLDL and GVFV…QPEA.

This sequence belongs to the MraZ family. Forms oligomers.

The protein localises to the cytoplasm. The protein resides in the nucleoid. This is Transcriptional regulator MraZ from Rhizobium rhizogenes (strain K84 / ATCC BAA-868) (Agrobacterium radiobacter).